A 159-amino-acid chain; its full sequence is Deoxyuridine 5'-triphosphate nucleotidohydrolase (159 aa).

DUMP-binding residues include Ser-79, Gly-92, Asp-95, Tyr-98, Lys-103, Arg-148, Phe-153, and Gly-154.

Belongs to the dUTPase family. Homotrimer. Requires Mg(2+) as cofactor.

It carries out the reaction dUTP + H2O = dUMP + diphosphate + H(+). Its pathway is pyrimidine metabolism; dUMP biosynthesis; dUMP from dCTP (dUTP route): step 2/2. Functionally, involved in nucleotide metabolism via production of dUMP, the immediate precursor of thymidine nucleotides, and decreases the intracellular concentration of dUTP so that uracil cannot be incorporated into DNA. This chain is Deoxyuridine 5'-triphosphate nucleotidohydrolase (DUT1), found in Candida albicans (strain SC5314 / ATCC MYA-2876) (Yeast).